Here is a 240-residue protein sequence, read N- to C-terminus: Thiamine-phosphate synthase (240 aa).

Residues 63 to 67 (QYREK) and asparagine 94 contribute to the 4-amino-2-methyl-5-(diphosphooxymethyl)pyrimidine site. Residues aspartate 95 and aspartate 114 each contribute to the Mg(2+) site. Threonine 133 serves as a coordination point for 4-amino-2-methyl-5-(diphosphooxymethyl)pyrimidine. 2-[(2R,5Z)-2-carboxy-4-methylthiazol-5(2H)-ylidene]ethyl phosphate is bound at residue 159-161 (TFT). Residue lysine 162 participates in 4-amino-2-methyl-5-(diphosphooxymethyl)pyrimidine binding. Residues glycine 190 and 210 to 211 (IS) contribute to the 2-[(2R,5Z)-2-carboxy-4-methylthiazol-5(2H)-ylidene]ethyl phosphate site.

It belongs to the thiamine-phosphate synthase family. Mg(2+) serves as cofactor.

The enzyme catalyses 2-[(2R,5Z)-2-carboxy-4-methylthiazol-5(2H)-ylidene]ethyl phosphate + 4-amino-2-methyl-5-(diphosphooxymethyl)pyrimidine + 2 H(+) = thiamine phosphate + CO2 + diphosphate. The catalysed reaction is 2-(2-carboxy-4-methylthiazol-5-yl)ethyl phosphate + 4-amino-2-methyl-5-(diphosphooxymethyl)pyrimidine + 2 H(+) = thiamine phosphate + CO2 + diphosphate. It carries out the reaction 4-methyl-5-(2-phosphooxyethyl)-thiazole + 4-amino-2-methyl-5-(diphosphooxymethyl)pyrimidine + H(+) = thiamine phosphate + diphosphate. The protein operates within cofactor biosynthesis; thiamine diphosphate biosynthesis; thiamine phosphate from 4-amino-2-methyl-5-diphosphomethylpyrimidine and 4-methyl-5-(2-phosphoethyl)-thiazole: step 1/1. Functionally, condenses 4-methyl-5-(beta-hydroxyethyl)thiazole monophosphate (THZ-P) and 2-methyl-4-amino-5-hydroxymethyl pyrimidine pyrophosphate (HMP-PP) to form thiamine monophosphate (TMP). The sequence is that of Thiamine-phosphate synthase from Methanosarcina mazei (strain ATCC BAA-159 / DSM 3647 / Goe1 / Go1 / JCM 11833 / OCM 88) (Methanosarcina frisia).